The sequence spans 516 residues: L-amino acid oxidase (516 aa).

A signal peptide spans M1–C18. Residues M61 to S62, E81 to A82, R89, and G105 to R108 each bind FAD. Residue R108 coordinates substrate. The N-linked (GlcNAc...) asparagine glycan is linked to N190. FAD is bound at residue V279. N-linked (GlcNAc...) asparagine glycans are attached at residues N299 and N404. C349 and C430 form a disulfide bridge. FAD-binding positions include E475 and G482 to T487. A substrate-binding site is contributed by G482–W483.

Belongs to the flavin monoamine oxidase family. FIG1 subfamily. In terms of assembly, homodimer; non-covalently linked. FAD serves as cofactor. N-glycosylated (14%). The enzymatic activity remains unchanged after deglycosylation. Expressed by the venom gland.

The protein resides in the secreted. It carries out the reaction an L-alpha-amino acid + O2 + H2O = a 2-oxocarboxylate + H2O2 + NH4(+). It catalyses the reaction L-leucine + O2 + H2O = 4-methyl-2-oxopentanoate + H2O2 + NH4(+). The enzyme catalyses L-phenylalanine + O2 + H2O = 3-phenylpyruvate + H2O2 + NH4(+). The catalysed reaction is L-tryptophan + O2 + H2O = indole-3-pyruvate + H2O2 + NH4(+). It carries out the reaction L-methionine + O2 + H2O = 4-methylsulfanyl-2-oxobutanoate + H2O2 + NH4(+). It catalyses the reaction L-isoleucine + O2 + H2O = (S)-3-methyl-2-oxopentanoate + H2O2 + NH4(+). Its activity is regulated as follows. Inhibited by the substrate analog N-acetyl tryptophan. Its function is as follows. Catalyzes an oxidative deamination of predominantly hydrophobic and aromatic L-amino acids, thus producing hydrogen peroxide that may contribute to the diverse toxic effects of this enzyme. Is highly active on L-Met&gt;L-Leu&gt;L-Phe&gt;L-Trp=L-Ile. Binds to the cell surface and enables the production of highly localized concentration of hydrogen peroxide in or near the binding interfaces. Does not bind to phospholipids. Induces platelet-rich plasma aggregation, shows cytotoxic effects on some cancer cell lines (B16-F10 (mouse melanoma), PC12 (rat pheochromocytoma), MCF-7 and MDA-MB-231 (human breast carcinoma)) and shows antibacterial activities against both Gram-positive and Gram-negative bacteria. Also exhibits hemorrhage and edema. Does not show cytotoxicity on erythrocytes and peripheral blood mononuclear cells. Its effect on platelets is controversial, since it either induces aggregation or inhibits agonist-induced aggregation. These different effects are probably due to different experimental conditions. The polypeptide is L-amino acid oxidase (Cerastes cerastes (Horned desert viper)).